The sequence spans 132 residues: Glycine cleavage system H protein (132 aa).

In terms of domain architecture, Lipoyl-binding spans 24-107 (TATIGLSAFA…GEEGWLIKVR (84 aa)). Lysine 65 is modified (N6-lipoyllysine).

The protein belongs to the GcvH family. The glycine cleavage system is composed of four proteins: P, T, L and H. The cofactor is (R)-lipoate.

In terms of biological role, the glycine cleavage system catalyzes the degradation of glycine. The H protein shuttles the methylamine group of glycine from the P protein to the T protein. The protein is Glycine cleavage system H protein of Synechocystis sp. (strain ATCC 27184 / PCC 6803 / Kazusa).